The chain runs to 374 residues: MLSTSRSRFIRNTNESGEEVTTFFDYDYGAPCHKFDVKQIGAQLLPPLYSLVFIFGFVGNMLVVLILINCKKLKCLTDIYLLNLAISDLLFLITLPLWAHSAANEWVFGNAMCKLFTGLYHIGYFGGIFFIILLTIDRYLAIVHAVFALKARTVTFGVVTSVITWLVAVFASVPGIIFTKCQKEDSVYVCGPYFPRGWNNFHTIMRNILGLVLPLLIMVICYSGILKTLLRCRNEKKRHRAVRVIFTIMIVYFLFWTPYNIVILLNTFQEFFGLSNCESTSQLDQATQVTETLGMTHCCINPIIYAFVGEKFRSLFHIALGCRIAPLQKPVCGGPGVRPGKNVKVTTQGLLDGRGKGKSIGRAPEASLQDKEGA.

Residues 1–42 (MLSTSRSRFIRNTNESGEEVTTFFDYDYGAPCHKFDVKQIGA) lie on the Extracellular side of the membrane. N14 carries an N-linked (GlcNAc...) asparagine glycan. Y26 is modified (sulfotyrosine). A helical membrane pass occupies residues 43–70 (QLLPPLYSLVFIFGFVGNMLVVLILINC). Over 71–80 (KKLKCLTDIY) the chain is Cytoplasmic. The chain crosses the membrane as a helical span at residues 81 to 100 (LLNLAISDLLFLITLPLWAH). The Extracellular portion of the chain corresponds to 101–114 (SAANEWVFGNAMCK). A disulfide bridge links C113 with C190. A helical membrane pass occupies residues 115–136 (LFTGLYHIGYFGGIFFIILLTI). Over 137 to 153 (DRYLAIVHAVFALKART) the chain is Cytoplasmic. Y139 is modified (phosphotyrosine; by JAK2). A helical transmembrane segment spans residues 154–178 (VTFGVVTSVITWLVAVFASVPGIIF). Residues 179–206 (TKCQKEDSVYVCGPYFPRGWNNFHTIMR) are Extracellular-facing. A helical membrane pass occupies residues 207–226 (NILGLVLPLLIMVICYSGIL). Residues 227–243 (KTLLRCRNEKKRHRAVR) are Cytoplasmic-facing. The helical transmembrane segment at 244–268 (VIFTIMIVYFLFWTPYNIVILLNTF) threads the bilayer. Residues 269 to 285 (QEFFGLSNCESTSQLDQ) are Extracellular-facing. A helical transmembrane segment spans residues 286-309 (ATQVTETLGMTHCCINPIIYAFVG). The Cytoplasmic segment spans residues 310 to 374 (EKFRSLFHIA…EASLQDKEGA (65 aa)). Residues 348–374 (QGLLDGRGKGKSIGRAPEASLQDKEGA) are disordered.

This sequence belongs to the G-protein coupled receptor 1 family. As to quaternary structure, interacts with ARRB1. Interacts (via extracellular N-terminal region) with beta-defensin DEFB106A/DEFB106B; this interaction may preferentially require specific tyrosine sulfation on CCR2. Interacts with NUP85; the interaction is required for CCR2 clusters formation on the cell membrane and CCR2 signaling. (Microbial infection) Binds to HIV-1 Tat. Post-translationally, N-glycosylated. Sulfation increases the affinity for both monomeric and dimeric CCL2 with stronger binding to the monomeric form. Binding of sulfated CCR2 to CCL2 promotes conversion of CCL2 from dimer to monomer. Expressed by monocytes and IL2-activated NK cells. Abundantly expressed on CD14+/CD16- monocytes and weakly on CD14+/CD16+ monocytes, type 2 dendritic cells (DCs) and plasmacytoid DCs (at protein level).

It localises to the cell membrane. Functionally, key functional receptor for CCL2 but can also bind CCL7, and CCL12. Also transduces signaling mediated by CCL13. Its binding with CCL2 on monocytes and macrophages mediates chemotaxis and migration induction through the activation of the PI3K cascade, the small G protein Rac and lamellipodium protrusion. Also acts as a receptor for the beta-defensin DEFB106A/DEFB106B. Regulates the expression of T-cell inflammatory cytokines and T-cell differentiation, promoting the differentiation of T-cells into T-helper 17 cells (Th17) during inflammation. Facilitates the export of mature thymocytes by enhancing directional movement of thymocytes to sphingosine-1-phosphate stimulation and up-regulation of S1P1R expression; signals through the JAK-STAT pathway to regulate FOXO1 activity leading to an increased expression of S1P1R. Plays an important role in mediating peripheral nerve injury-induced neuropathic pain. Increases NMDA-mediated synaptic transmission in both dopamine D1 and D2 receptor-containing neurons, which may be caused by MAPK/ERK-dependent phosphorylation of GRIN2B/NMDAR2B. Mediates the recruitment of macrophages and monocytes to the injury site following brain injury. In terms of biological role, (Microbial infection) Alternative coreceptor with CD4 for HIV-1 infection. The protein is C-C chemokine receptor type 2 (CCR2) of Homo sapiens (Human).